The sequence spans 194 residues: Fe/S biogenesis protein NfuA (194 aa).

Residues cysteine 151 and cysteine 154 each contribute to the [4Fe-4S] cluster site.

It belongs to the NfuA family. Homodimer. [4Fe-4S] cluster serves as cofactor.

Involved in iron-sulfur cluster biogenesis. Binds a 4Fe-4S cluster, can transfer this cluster to apoproteins, and thereby intervenes in the maturation of Fe/S proteins. Could also act as a scaffold/chaperone for damaged Fe/S proteins. In Actinobacillus succinogenes (strain ATCC 55618 / DSM 22257 / CCUG 43843 / 130Z), this protein is Fe/S biogenesis protein NfuA.